The following is a 178-amino-acid chain: Putative adenylate kinase (178 aa).

The ATP site is built by Gly10, Gly12, Lys13, Ser14, and Ser15. The interval 29 to 50 (TVVELAEKHGCIIDEEDGEIVI) is NMP. The LID stretch occupies residues 94–104 (GRNWSEEKLLE). Arg95 is a binding site for ATP.

This sequence belongs to the adenylate kinase family. AK6 subfamily. As to quaternary structure, interacts with uS11. Not a structural component of 40S pre-ribosomes, but transiently interacts with them by binding to uS11.

The enzyme catalyses AMP + ATP = 2 ADP. It carries out the reaction ATP + H2O = ADP + phosphate + H(+). Its function is as follows. Broad-specificity nucleoside monophosphate (NMP) kinase that catalyzes the reversible transfer of the terminal phosphate group between nucleoside triphosphates and monophosphates. Also has ATPase activity. Involved in the late maturation steps of the 30S ribosomal particles, specifically 16S rRNA maturation. While NMP activity is not required for ribosome maturation, ATPase activity is. Associates transiently with small ribosomal subunit protein uS11. ATP hydrolysis breaks the interaction with uS11. May temporarily remove uS11 from the ribosome to enable a conformational change of the ribosomal RNA that is needed for the final maturation step of the small ribosomal subunit. This is Putative adenylate kinase from Archaeoglobus fulgidus (strain ATCC 49558 / DSM 4304 / JCM 9628 / NBRC 100126 / VC-16).